Reading from the N-terminus, the 290-residue chain is Acetyl-coenzyme A carboxylase carboxyl transferase subunit beta (290 aa).

A CoA carboxyltransferase N-terminal domain is found at 29-290 (LWGKCPECSQ…RLHGYREKRK (262 aa)). Residues Cys-33, Cys-36, Cys-52, and Cys-55 each coordinate Zn(2+). A C4-type zinc finger spans residues 33-55 (CPECSQVVYRKDLLENANVCSNC).

Belongs to the AccD/PCCB family. As to quaternary structure, acetyl-CoA carboxylase is a heterohexamer composed of biotin carboxyl carrier protein (AccB), biotin carboxylase (AccC) and two subunits each of ACCase subunit alpha (AccA) and ACCase subunit beta (AccD). The cofactor is Zn(2+).

Its subcellular location is the cytoplasm. It carries out the reaction N(6)-carboxybiotinyl-L-lysyl-[protein] + acetyl-CoA = N(6)-biotinyl-L-lysyl-[protein] + malonyl-CoA. It functions in the pathway lipid metabolism; malonyl-CoA biosynthesis; malonyl-CoA from acetyl-CoA: step 1/1. Its function is as follows. Component of the acetyl coenzyme A carboxylase (ACC) complex. Biotin carboxylase (BC) catalyzes the carboxylation of biotin on its carrier protein (BCCP) and then the CO(2) group is transferred by the transcarboxylase to acetyl-CoA to form malonyl-CoA. The chain is Acetyl-coenzyme A carboxylase carboxyl transferase subunit beta from Prochlorococcus marinus (strain MIT 9211).